Reading from the N-terminus, the 120-residue chain is MSASAGGSHQPSQSRAIPTRTVAISDAAQLPQDYCTTPGGTLFSTTPGGTRIIYDRKFLLDRRNSPMAQTPPCHLPNIPGVTSPGALIEDSKVEVNNLNNLNNHDRKHAVGDEAQFEMDI.

2 positions are modified to phosphothreonine; by MTOR: Thr37 and Thr46. Positions 54-60 (YDRKFLL) match the YXXXXLphi motif motif. A Phosphoserine; by MTOR modification is found at Ser65. Thr70 is subject to Phosphothreonine; by MTOR. Ser83 is modified (phosphoserine). Residues Asn99 and Asn102 each carry the deamidated asparagine modification. The TOS motif signature appears at 116–120 (FEMDI).

It belongs to the eIF4E-binding protein family. Hypophosphorylated EIF4EBP2 interacts with EIF4E; phosphorylation of EIF4EBP2 by mTORC1 causes dissociation of the complex allowing EIF4G1/EIF4G3 to bind and consequent initiation of translation. Interacts (via TOS motif) with RPTOR; promoting phosphorylation by mTORC1. Interacts with PCMT1; required to prevent isoaspartate accumulation and convert isoaspartate to Asp. In terms of processing, phosphorylation at Thr-37, Thr-46, Ser-65, Thr-70 and Ser-83 is mediated by MTOR and corresponds to the hyperphosphorylated form: it abolishes binding to EIF4E by inducing folding of intrinsically disordered regions. First phosphorylated at Thr-37 and Thr-46 by MTOR, inducing folding of region encompassing residues from Pro-18 to Arg-62 of into a four-stranded beta-domain that sequesters the helical YXXXXLPhi motif into a partly buried beta-strand, blocking accessibility to EIF4E. Protein phosphorylated at Thr-37 and Thr-46 is however unstable and subsequent phosphorylation at Ser-65, Thr-70 and Ser-83 is required to stabilize the fold, decreasing affinity for EIF4E by a factor of 4000. Phosphorylated in response to insulin, EGF and PDGF. Deamidated at Asn-99 and Asn-102 to aspartate (Asp) in brain. Deamidation promotes interaction with RPTOR, subsequent phosphorylation by mTORC1 and increased translation, leading to impair kinetics of excitatory synaptic transmission. Deamidation takes place during postnatal development, when the PI3K-Akt-mTOR signaling is reduced, suggesting it acts as a compensatory mechanism to promote translation despite attenuated PI3K-Akt-mTOR signaling in neuron development. Deamidation converts Asn residues into a mixture of Asp and isoaspartate; interactions with PCMT1 is required to prevent isoaspartate accumulation and convert isoaspartate to Asp. As to expression, enriched in brain.

The protein localises to the cytoplasm. The protein resides in the nucleus. Functionally, repressor of translation initiation involved in synaptic plasticity, learning and memory formation. Regulates EIF4E activity by preventing its assembly into the eIF4F complex: hypophosphorylated form of EIF4EBP2 competes with EIF4G1/EIF4G3 and strongly binds to EIF4E, leading to repress translation. In contrast, hyperphosphorylated form dissociates from EIF4E, allowing interaction between EIF4G1/EIF4G3 and EIF4E, leading to initiation of translation. EIF4EBP2 is enriched in brain and acts as a regulator of synapse activity and neuronal stem cell renewal via its ability to repress translation initiation. Mediates the regulation of protein translation by hormones, growth factors and other stimuli that signal through the MAP kinase and mTORC1 pathways. The protein is Eukaryotic translation initiation factor 4E-binding protein 2 of Mus musculus (Mouse).